Consider the following 339-residue polypeptide: Transcription initiation factor IIB (339 aa).

A TFIIB-type zinc finger spans residues 39 to 70 (EELICPVCGSKSIIKDYERAEIVCEMCGCVLQ). Residues Cys-43, Cys-46, Cys-62, and Cys-65 each coordinate Zn(2+). Repeat copies occupy residues 156 to 239 (SELD…SREL) and 250 to 331 (DYVP…ELTE).

Belongs to the TFIIB family.

Functionally, stabilizes TBP binding to an archaeal box-A promoter. Also responsible for recruiting RNA polymerase II to the pre-initiation complex (DNA-TBP-TFIIB). The chain is Transcription initiation factor IIB from Methanococcus maripaludis (strain DSM 14266 / JCM 13030 / NBRC 101832 / S2 / LL).